A 162-amino-acid polypeptide reads, in one-letter code: Protein cornichon homolog 2 (162 aa).

The Cytoplasmic portion of the chain corresponds to 1–10; that stretch reads MAFTFAAFCY. Residues 11-31 traverse the membrane as a helical segment; sequence MLTLVLCASLIFFIIWHIIAF. The Lumenal segment spans residues 32–72; it reads DELRTDFKNPIEQGNPSRARERVKNVERICCLLRKLVVPEY. The chain crosses the membrane as a helical span at residues 73 to 93; it reads CIHGLFCLMFMCAAEWVTLGL. Topologically, residues 94–138 are cytoplasmic; sequence NIPLLFYHLWRYFHRPADGSEVMFDPVSIMNVDILNYCQKEAWCK. The helical transmembrane segment at 139-161 threads the bilayer; that stretch reads LAFYLLSFFYYLYRVGATVRYVS. Residue Ala162 is a topological domain, lumenal.

The protein belongs to the cornichon family.

It localises to the membrane. Regulates the trafficking and gating properties of AMPA-selective glutamate receptors (AMPARs). This is Protein cornichon homolog 2 (cnih2) from Xenopus tropicalis (Western clawed frog).